A 98-amino-acid polypeptide reads, in one-letter code: NADH-ubiquinone oxidoreductase chain 4L (98 aa).

3 helical membrane passes run 1–21 (MSLIHMNVMMAFSMSLVGLLM), 26–46 (LMSALLCLEGMALSLFIFTTL), and 61–81 (IILLVFTACEAAIGLALLVMI).

It belongs to the complex I subunit 4L family. In terms of assembly, core subunit of respiratory chain NADH dehydrogenase (Complex I) which is composed of 45 different subunits.

The protein localises to the mitochondrion inner membrane. The enzyme catalyses a ubiquinone + NADH + 5 H(+)(in) = a ubiquinol + NAD(+) + 4 H(+)(out). In terms of biological role, core subunit of the mitochondrial membrane respiratory chain NADH dehydrogenase (Complex I) which catalyzes electron transfer from NADH through the respiratory chain, using ubiquinone as an electron acceptor. Part of the enzyme membrane arm which is embedded in the lipid bilayer and involved in proton translocation. The chain is NADH-ubiquinone oxidoreductase chain 4L (MT-ND4L) from Physeter macrocephalus (Sperm whale).